The primary structure comprises 233 residues: Small ribosomal subunit protein uS3 (233 aa).

A KH type-2 domain is found at 39-107; that stretch reads VRQFLASELT…PSQINIAEVR (69 aa).

This sequence belongs to the universal ribosomal protein uS3 family. As to quaternary structure, part of the 30S ribosomal subunit. Forms a tight complex with proteins S10 and S14.

Binds the lower part of the 30S subunit head. Binds mRNA in the 70S ribosome, positioning it for translation. The chain is Small ribosomal subunit protein uS3 from Baumannia cicadellinicola subsp. Homalodisca coagulata.